The following is a 298-amino-acid chain: Bifunctional protein FolD (298 aa).

Residues 165–167 (GRS), Ser190, and Ile231 contribute to the NADP(+) site.

It belongs to the tetrahydrofolate dehydrogenase/cyclohydrolase family. In terms of assembly, homodimer.

The catalysed reaction is (6R)-5,10-methylene-5,6,7,8-tetrahydrofolate + NADP(+) = (6R)-5,10-methenyltetrahydrofolate + NADPH. It catalyses the reaction (6R)-5,10-methenyltetrahydrofolate + H2O = (6R)-10-formyltetrahydrofolate + H(+). It participates in one-carbon metabolism; tetrahydrofolate interconversion. In terms of biological role, catalyzes the oxidation of 5,10-methylenetetrahydrofolate to 5,10-methenyltetrahydrofolate and then the hydrolysis of 5,10-methenyltetrahydrofolate to 10-formyltetrahydrofolate. This is Bifunctional protein FolD from Prochlorococcus marinus (strain MIT 9515).